The sequence spans 120 residues: Dihydroneopterin aldolase (120 aa).

Residues glutamate 21, tyrosine 53, and 72 to 73 each bind substrate; that span reads VE. Lysine 99 functions as the Proton donor/acceptor in the catalytic mechanism.

The protein belongs to the DHNA family.

It catalyses the reaction 7,8-dihydroneopterin = 6-hydroxymethyl-7,8-dihydropterin + glycolaldehyde. It participates in cofactor biosynthesis; tetrahydrofolate biosynthesis; 2-amino-4-hydroxy-6-hydroxymethyl-7,8-dihydropteridine diphosphate from 7,8-dihydroneopterin triphosphate: step 3/4. Catalyzes the conversion of 7,8-dihydroneopterin to 6-hydroxymethyl-7,8-dihydropterin. This Bacillus subtilis (strain 168) protein is Dihydroneopterin aldolase (folB).